The chain runs to 509 residues: ATP synthase subunit alpha (509 aa).

Residue Gly169 to Thr176 participates in ATP binding.

This sequence belongs to the ATPase alpha/beta chains family. As to quaternary structure, F-type ATPases have 2 components, CF(1) - the catalytic core - and CF(0) - the membrane proton channel. CF(1) has five subunits: alpha(3), beta(3), gamma(1), delta(1), epsilon(1). CF(0) has three main subunits: a(1), b(2) and c(9-12). The alpha and beta chains form an alternating ring which encloses part of the gamma chain. CF(1) is attached to CF(0) by a central stalk formed by the gamma and epsilon chains, while a peripheral stalk is formed by the delta and b chains.

It localises to the cell inner membrane. The catalysed reaction is ATP + H2O + 4 H(+)(in) = ADP + phosphate + 5 H(+)(out). Its function is as follows. Produces ATP from ADP in the presence of a proton gradient across the membrane. The alpha chain is a regulatory subunit. This is ATP synthase subunit alpha from Methylobacterium nodulans (strain LMG 21967 / CNCM I-2342 / ORS 2060).